The sequence spans 255 residues: Transcription factor CAULIFLOWER (255 aa).

The 61-residue stretch at 1 to 61 (MGRGRVELKR…GKLFEYSSES (61 aa)) folds into the MADS-box domain. Residues 90 to 180 (QTNWSMEYSR…TKQIKERENI (91 aa)) enclose the K-box domain. Residues 90–198 (QTNWSMEYSR…EQLNRSVDDV (109 aa)) adopt a coiled-coil conformation.

In terms of assembly, homodimer capable of binding to CArG-box sequences. As to expression, expressed in young flower primordia.

It is found in the nucleus. In terms of biological role, probable transcription factor that promotes early floral meristem identity in synergy with APETALA1, FRUITFULL and LEAFY. Is required subsequently for the transition of an inflorescence meristem into a floral meristem. Seems to be partially redundant to the function of APETALA1. Positively regulates the APETALA1 and LEAFY expression. The protein is Transcription factor CAULIFLOWER (CAL) of Arabidopsis thaliana (Mouse-ear cress).